The sequence spans 104 residues: Large ribosomal subunit protein uL24 (104 aa).

It belongs to the universal ribosomal protein uL24 family. In terms of assembly, part of the 50S ribosomal subunit.

Functionally, one of two assembly initiator proteins, it binds directly to the 5'-end of the 23S rRNA, where it nucleates assembly of the 50S subunit. One of the proteins that surrounds the polypeptide exit tunnel on the outside of the subunit. The polypeptide is Large ribosomal subunit protein uL24 (Methylobacterium radiotolerans (strain ATCC 27329 / DSM 1819 / JCM 2831 / NBRC 15690 / NCIMB 10815 / 0-1)).